Consider the following 128-residue polypeptide: uncharacterized protein (128 aa).

The helical transmembrane segment at 8 to 28 threads the bilayer; sequence YQAIYLIFAGFTVFGLLLHFY.

The protein localises to the membrane. This is an uncharacterized protein from Haemophilus influenzae (strain ATCC 51907 / DSM 11121 / KW20 / Rd).